A 90-amino-acid polypeptide reads, in one-letter code: Evasin P1126 (90 aa).

Residues 1-25 form the signal peptide; it reads MTSHSAVRIAIFAVIALHSIFECLS. Intrachain disulfides connect Cys46/Cys62, Cys50/Cys64, and Cys58/Cys75. Asn55 carries N-linked (GlcNAc...) asparagine glycosylation. An N-linked (GlcNAc...) asparagine glycan is attached at Asn77.

It localises to the secreted. In terms of biological role, salivary chemokine-binding protein which binds to host chemokines CXCL1, CXCL2, CXCL3, CXCL4, CXCL5, CXCL6, CXCL7, CXCL10 and CXCL11. The polypeptide is Evasin P1126 (Amblyomma cajennense (Cayenne tick)).